A 453-amino-acid polypeptide reads, in one-letter code: Dibenzothiophene-sulfone monooxygenase (453 aa).

Positions 59, 106, 156, 160, and 231 each coordinate FMN.

It belongs to the NtaA/SnaA/DszA monooxygenase family. Homodimer.

Its subcellular location is the cytoplasm. It carries out the reaction dibenzothiophene 5,5-dioxide + FMNH2 + NADH + O2 = 2'-hydroxybiphenyl-2-sulfinate + FMN + NAD(+) + H2O + H(+). Its pathway is sulfur metabolism; dibenzothiophene degradation. Catalyzes the second step of the '4S' desulfurization pathway that removes covalently bound sulfur from dibenzothiophene (DBT) without breaking carbon-carbon bonds. Metabolizes DBT-sulfone (DBTO2 or DBT 5,5-dioxide) to 2-(2'-hydroxyphenyl)benzene sulphinate (HBPS). The polypeptide is Dibenzothiophene-sulfone monooxygenase (Rhodococcus erythropolis (strain XP)).